Reading from the N-terminus, the 534-residue chain is H(+)/hexose cotransporter 1 (534 aa).

Topologically, residues 1 to 21 are cytoplasmic; the sequence is MAGGGVVVVSGRGLSTGDYRG. A helical membrane pass occupies residues 22-42; the sequence is GLTVYVVMVAFMAACGGLLLG. The Extracellular segment spans residues 43-87; it reads YDNGVTGGVVSLEAFEKKFFPDVWAKKQEVHEDSPYCTYDNAKLQ. Residues 88 to 108 traverse the membrane as a helical segment; that stretch reads LFVSSLFLAGLVSCLFASWIT. Residues 109-114 lie on the Cytoplasmic side of the membrane; the sequence is RNWGRK. The helical transmembrane segment at 115–135 threads the bilayer; the sequence is VTMGIGGAFFVAGGLVNAFAQ. The Extracellular segment spans residues 136–144; the sequence is DMAMLIVGR. The chain crosses the membrane as a helical span at residues 145 to 165; sequence VLLGFGVGLGSQVVPQYLSEV. The Cytoplasmic segment spans residues 166–173; it reads APFSHRGM. A helical membrane pass occupies residues 174–194; that stretch reads LNIGYQLFVTIGILIAGLVNY. The Extracellular segment spans residues 195–204; sequence AVRDWENGWR. A helical membrane pass occupies residues 205 to 225; that stretch reads LSLGPAAAPGAILFLGSLVLP. The Cytoplasmic segment spans residues 226 to 299; it reads ESPNFLVEKG…TSFVIQFFQQ (74 aa). A helical transmembrane segment spans residues 300-322; sequence FTGINAIIFYVPVLFSSLGSANS. The Extracellular segment spans residues 323–328; it reads AALLNT. Residues 329-349 traverse the membrane as a helical segment; that stretch reads VVVGAVNVGSTLIAVMFSDKF. Over 350–352 the chain is Cytoplasmic; that stretch reads GRR. Residues 353 to 373 form a helical membrane-spanning segment; sequence FLLIEGGIQCCLAMLTTGVVL. Residues 374-387 are Extracellular-facing; the sequence is AIEFAKYGTDPLPK. The chain crosses the membrane as a helical span at residues 388–408; sequence AVASGILAVICIFISGFAWSW. The Cytoplasmic segment spans residues 409-433; it reads GPMGWLIPSEIFTLETRPAGTAVAV. The helical transmembrane segment at 434 to 454 threads the bilayer; the sequence is VGNFLFSFVIGQAFVSMLCAM. The Extracellular portion of the chain corresponds to 455–456; the sequence is EY. Residues 457–477 traverse the membrane as a helical segment; it reads GVFLFFAGWLVIMVLCAIFLL. Residues 478-534 lie on the Cytoplasmic side of the membrane; that stretch reads PETKGVPIERVQALYARHWFWNRVMGPAAAEVIAEDEKRVAAASAIIKEEELSKAMK.

It belongs to the major facilitator superfamily. Sugar transporter (TC 2.A.1.1) family.

It is found in the membrane. Functionally, active uptake of hexoses. This chain is H(+)/hexose cotransporter 1 (HUP1), found in Parachlorella kessleri (Green alga).